A 126-amino-acid polypeptide reads, in one-letter code: Protein ApaG (126 aa).

An ApaG domain is found at Ser2–His126.

This Pseudomonas entomophila (strain L48) protein is Protein ApaG.